The sequence spans 302 residues: Dihydroorotate dehydrogenase B (NAD(+)), catalytic subunit (302 aa).

FMN contacts are provided by residues S23 and 47-48 (KS). Residues K47, 71–75 (NAMGL), and N125 each bind substrate. N125 contributes to the FMN binding site. The Nucleophile role is filled by C128. Positions 163 and 189 each coordinate FMN. A substrate-binding site is contributed by 190 to 191 (NT). FMN is bound by residues G215, 241 to 242 (GG), and 263 to 264 (GT).

Belongs to the dihydroorotate dehydrogenase family. Type 1 subfamily. As to quaternary structure, heterotetramer of 2 PyrK and 2 PyrD type B subunits. FMN serves as cofactor.

Its subcellular location is the cytoplasm. The catalysed reaction is (S)-dihydroorotate + NAD(+) = orotate + NADH + H(+). The protein operates within pyrimidine metabolism; UMP biosynthesis via de novo pathway; orotate from (S)-dihydroorotate (NAD(+) route): step 1/1. Its function is as follows. Catalyzes the conversion of dihydroorotate to orotate with NAD(+) as electron acceptor. The chain is Dihydroorotate dehydrogenase B (NAD(+)), catalytic subunit (pyrD) from Thermococcus kodakarensis (strain ATCC BAA-918 / JCM 12380 / KOD1) (Pyrococcus kodakaraensis (strain KOD1)).